The following is a 780-amino-acid chain: Translation initiation factor IF-2 (780 aa).

The segment at Ala24–Ala194 is disordered. 2 stretches are compositionally biased toward polar residues: residues Glu59–Val71 and Gln80–Gln90. Low complexity-rich tracts occupy residues Asn98–Asn114 and Asn132–Asn158. Over residues Arg159–Gln176 the composition is skewed to basic residues. Over residues Arg177–Ala194 the composition is skewed to basic and acidic residues. The tr-type G domain occupies Pro281–Lys450. A G1 region spans residues Gly290–Thr297. Gly290–Thr297 lines the GTP pocket. The segment at Gly315–Ala319 is G2. Positions Asp336–Gly339 are G3. Residues Asp336–His340 and Asn390–Asp393 each bind GTP. The tract at residues Asn390–Asp393 is G4. Residues Ser426–Lys428 are G5.

This sequence belongs to the TRAFAC class translation factor GTPase superfamily. Classic translation factor GTPase family. IF-2 subfamily.

Its subcellular location is the cytoplasm. Its function is as follows. One of the essential components for the initiation of protein synthesis. Protects formylmethionyl-tRNA from spontaneous hydrolysis and promotes its binding to the 30S ribosomal subunits. Also involved in the hydrolysis of GTP during the formation of the 70S ribosomal complex. The protein is Translation initiation factor IF-2 of Levilactobacillus brevis (strain ATCC 367 / BCRC 12310 / CIP 105137 / JCM 1170 / LMG 11437 / NCIMB 947 / NCTC 947) (Lactobacillus brevis).